Reading from the N-terminus, the 467-residue chain is ATP synthase subunit beta (467 aa).

Residue 156–163 coordinates ATP; it reads GGAGVGKT.

Belongs to the ATPase alpha/beta chains family. As to quaternary structure, F-type ATPases have 2 components, CF(1) - the catalytic core - and CF(0) - the membrane proton channel. CF(1) has five subunits: alpha(3), beta(3), gamma(1), delta(1), epsilon(1). CF(0) has three main subunits: a(1), b(2) and c(9-12). The alpha and beta chains form an alternating ring which encloses part of the gamma chain. CF(1) is attached to CF(0) by a central stalk formed by the gamma and epsilon chains, while a peripheral stalk is formed by the delta and b chains.

Its subcellular location is the cell inner membrane. It carries out the reaction ATP + H2O + 4 H(+)(in) = ADP + phosphate + 5 H(+)(out). Produces ATP from ADP in the presence of a proton gradient across the membrane. The catalytic sites are hosted primarily by the beta subunits. The sequence is that of ATP synthase subunit beta from Cupriavidus taiwanensis (strain DSM 17343 / BCRC 17206 / CCUG 44338 / CIP 107171 / LMG 19424 / R1) (Ralstonia taiwanensis (strain LMG 19424)).